We begin with the raw amino-acid sequence, 234 residues long: CD-NTase-associated protein 13 (234 aa).

A helical transmembrane segment spans residues 20–42; the sequence is TIMKNVIANVSTAITLALMILWI.

It in the C-terminal section; belongs to the bacterial STING family.

The protein localises to the cell inner membrane. Its function is as follows. Effector protein of a CBASS antivirus system. CBASS (cyclic oligonucleotide-based antiphage signaling system) provides immunity against bacteriophage. The CD-NTase protein synthesizes cyclic nucleotides in response to infection; these serve as specific second messenger signals. The signals activate a diverse range of effectors, leading to bacterial cell death and thus abortive phage infection. A type I-D CBASS(GG) system. Functionally, binds c-di-GMP (synthesized by the cognate CdnE encoded upstream in the same operon) and about 10-fold less well 3'3'-cGAMP, but not c-di-AMP, 2'3'-cGAMP or cUMP-AMP (tested with a protein without the transmembrane region). The effector protein for this CBASS system, its activity is stimulated by c-di-GMP and leads to cell death. This Roseivirga ehrenbergii (strain DSM 102268 / JCM 13514 / KCTC 12282 / NCIMB 14502 / KMM 6017) protein is CD-NTase-associated protein 13.